The chain runs to 942 residues: Protein inturned (942 aa).

Disordered stretches follow at residues 1–56 and 128–156; these read MAGL…PEWL and LPRR…KTGV. The segment covering 22 to 32 has biased composition (acidic residues); the sequence is SQEEEEEEGDS. Low complexity predominate over residues 33-48; the sequence is DAGASSLGSYSSASSD. A compositionally biased stretch (polar residues) spans 137–156; the sequence is SSNNGPVSILKHQSSQKTGV. The PDZ domain maps to 185–267; the sequence is LLEVLVGIIH…PMQVKLTFEN (83 aa). S674 and S678 each carry phosphoserine. Residues 707–751 form a disordered region; the sequence is KARKPSPSRIGGGREPTEGEESAGLSPHATPDAVRKQRESEGSDD.

It belongs to the inturned family. In terms of assembly, component of the CPLANE (ciliogenesis and planar polarity effectors) complex, composed of INTU, FUZ and WDPCP. Interacts with CPLANE1. Interacts with NPHP4 and DAAM1; INTU is mediating the interaction between NPHP4 and DAAM1. As to expression, widely expressed in E8.5 and E9.5 wild type embryos. Present in various adult organs (at protein level).

It localises to the cytoplasm. It is found in the cell surface. The protein localises to the cytoskeleton. The protein resides in the cilium basal body. Its subcellular location is the microtubule organizing center. It localises to the centrosome. It is found in the centriole. Plays a key role in ciliogenesis and embryonic development. Regulator of cilia formation by controlling the organization of the apical actin cytoskeleton and the positioning of the basal bodies at the apical cell surface, which in turn is essential for the normal orientation of elongating ciliary microtubules. Plays a key role in definition of cell polarity via its role in ciliogenesis but not via conversion extension. Has an indirect effect on hedgehog signaling. Proposed to function as core component of the CPLANE (ciliogenesis and planar polarity effectors) complex involved in the recruitment of peripheral IFT-A proteins to basal bodies. Required for recruitment of CPLANE2 to the mother centriole. Binds phosphatidylinositol 3-phosphate with highest affinity, followed by phosphatidylinositol 4-phosphate and phosphatidylinositol 5-phosphate. The protein is Protein inturned (Intu) of Mus musculus (Mouse).